The chain runs to 380 residues: Ribosomal RNA large subunit methyltransferase G (380 aa).

This sequence belongs to the methyltransferase superfamily. RlmG family.

It localises to the cytoplasm. It carries out the reaction guanosine(1835) in 23S rRNA + S-adenosyl-L-methionine = N(2)-methylguanosine(1835) in 23S rRNA + S-adenosyl-L-homocysteine + H(+). Specifically methylates the guanine in position 1835 (m2G1835) of 23S rRNA. The chain is Ribosomal RNA large subunit methyltransferase G from Aeromonas hydrophila subsp. hydrophila (strain ATCC 7966 / DSM 30187 / BCRC 13018 / CCUG 14551 / JCM 1027 / KCTC 2358 / NCIMB 9240 / NCTC 8049).